A 233-amino-acid chain; its full sequence is Cilia- and flagella-associated protein 299 (233 aa).

It localises to the cytoplasm. The protein localises to the nucleus. Functionally, may be involved in spermatogenesis. This chain is Cilia- and flagella-associated protein 299, found in Xenopus laevis (African clawed frog).